The following is an 819-amino-acid chain: Capsid-associated protein Vp91 (819 aa).

A signal peptide spans 1-18; it reads MSDVVLLVLAIILITIFT. A C2HC BV-type zinc finger spans residues 147-196; sequence CVPVDPCAGRAPGRYPMDERLLDTLVHNQPSDKDYSAGEHLHHPTLYLRC. 2 disulfide bridges follow: C207-C220 and C260-C273. A glycan (N-linked (GlcNAc...) asparagine; by host) is linked at N210. Residues 223–281 enclose the Chitin-binding type-2 domain; that stretch reads NELCEGRPDGFVLAYFPETLRVNEFVECRGGKHVVARCPDQQVFDRALMTCVQTHPCAF. N-linked (GlcNAc...) asparagine; by host glycosylation is found at N588 and N609. The disordered stretch occupies residues 650-671; the sequence is GDGDHWAPEAPPTQPEAPPAPE. Positions 658-671 are enriched in pro residues; that stretch reads EAPPTQPEAPPAPE. A glycan (N-linked (GlcNAc...) asparagine; by host) is linked at N752.

The protein resides in the virion. Functionally, probable capsid-associated protein. This chain is Capsid-associated protein Vp91 (p91), found in Orgyia pseudotsugata (Douglas-fir tussock moth).